A 508-amino-acid polypeptide reads, in one-letter code: PTS system mannitol-specific EIICB component (508 aa).

Over 1 to 30 (MSQTETQENKGLGRKVQAFGSFLSSMIMPN) the chain is Cytoplasmic. One can recognise a PTS EIIC type-2 domain in the interval 19–351 (FGSFLSSMIM…LKFTKEPEED (333 aa)). A helical membrane pass occupies residues 31–52 (IGAFIAWGFIAAIFIDGGWWPN). Residues 53 to 56 (KDLS) are Extracellular-facing. A helical transmembrane segment spans residues 57-77 (ELAGPMISYLIPLLIAYSGGR). The Cytoplasmic portion of the chain corresponds to 78-141 (LIHEMRGGII…QGFEMLFNNF (64 aa)). Residues 142–163 (SAGILGFIMTIVGFKILAPIME) traverse the membrane as a helical segment. The Extracellular portion of the chain corresponds to 164–172 (FIMHILSLA). A helical membrane pass occupies residues 173-193 (VEALVHAHLLPLVSIIVEPAK). The Cytoplasmic segment spans residues 194–280 (IVFLNNAINH…VLMRPLLFIA (87 aa)). The helical transmembrane segment at 281–300 (VILGGMTGVATYSLLDFGFK) threads the bilayer. Topologically, residues 301–320 (SPASPGSFIVYMLNAPKGEF) are extracellular. A helical membrane pass occupies residues 321-342 (LHMVLGVLLAAIVSFIVAALIL). Topologically, residues 343–508 (KFTKEPEEDL…RYDELLENLK (166 aa)) are cytoplasmic. The tract at residues 355-400 (ATEKMEASKGKKSSVSSKLKGNEDNNATSTTASTSTSENNEEQSEE) is disordered. Residues 367-392 (SSVSSKLKGNEDNNATSTTASTSTSE) are compositionally biased toward low complexity. The PTS EIIB type-2 domain occupies 420 to 508 (NHVIFACDAG…RYDELLENLK (89 aa)). Cys426 functions as the Phosphocysteine intermediate; for EIIB activity in the catalytic mechanism. Cys426 bears the Phosphocysteine; by EIIA mark.

In terms of assembly, homodimer.

The protein localises to the cell membrane. The enzyme catalyses D-mannitol(out) + N(pros)-phospho-L-histidyl-[protein] = D-mannitol 1-phosphate(in) + L-histidyl-[protein]. The phosphoenolpyruvate-dependent sugar phosphotransferase system (sugar PTS), a major carbohydrate active transport system, catalyzes the phosphorylation of incoming sugar substrates concomitantly with their translocation across the cell membrane. The enzyme II CmtAB PTS system is involved in D-mannitol transport. The polypeptide is PTS system mannitol-specific EIICB component (mtlA) (Staphylococcus saprophyticus subsp. saprophyticus (strain ATCC 15305 / DSM 20229 / NCIMB 8711 / NCTC 7292 / S-41)).